Consider the following 344-residue polypeptide: Oxygen sensor histidine kinase NreB (344 aa).

Residues Cys58, Cys61, Cys73, and Cys76 each coordinate [4Fe-4S] cluster. One can recognise a Histidine kinase domain in the interval 147–344 (ENERKRISRE…GTIITLDIPI (198 aa)). His158 is modified (phosphohistidine; by autocatalysis).

Requires [4Fe-4S] cluster as cofactor. Post-translationally, autophosphorylated.

Its subcellular location is the cytoplasm. It catalyses the reaction ATP + protein L-histidine = ADP + protein N-phospho-L-histidine.. In terms of biological role, member of the two-component regulatory system NreB/NreC involved in the control of dissimilatory nitrate/nitrite reduction in response to oxygen. NreB functions as a direct oxygen sensor histidine kinase which is autophosphorylated, in the absence of oxygen, probably at the conserved histidine residue, and transfers its phosphate group probably to a conserved aspartate residue of NreC. NreB/NreC activates the expression of the nitrate (narGHJI) and nitrite (nir) reductase operons, as well as the putative nitrate transporter gene narT. This Staphylococcus epidermidis (strain ATCC 12228 / FDA PCI 1200) protein is Oxygen sensor histidine kinase NreB (nreB).